The sequence spans 397 residues: Elongation factor Tu (397 aa).

Positions 10–207 constitute a tr-type G domain; sequence KPHVNIGTIG…ACDSYIEEPE (198 aa). The segment at 19 to 26 is G1; the sequence is GHIDHGKT. 19–26 is a GTP binding site; that stretch reads GHIDHGKT. T26 serves as a coordination point for Mg(2+). The segment at 60–64 is G2; sequence GITIA. The interval 81–84 is G3; the sequence is DCPG. GTP is bound by residues 81–85 and 136–139; these read DCPGH and NKCD. The segment at 136–139 is G4; the sequence is NKCD. The segment at 174 to 176 is G5; the sequence is SAL.

This sequence belongs to the TRAFAC class translation factor GTPase superfamily. Classic translation factor GTPase family. EF-Tu/EF-1A subfamily. Monomer.

It localises to the cytoplasm. The enzyme catalyses GTP + H2O = GDP + phosphate + H(+). In terms of biological role, GTP hydrolase that promotes the GTP-dependent binding of aminoacyl-tRNA to the A-site of ribosomes during protein biosynthesis. In Maridesulfovibrio salexigens (strain ATCC 14822 / DSM 2638 / NCIMB 8403 / VKM B-1763) (Desulfovibrio salexigens), this protein is Elongation factor Tu.